The sequence spans 395 residues: Aurora kinase A (395 aa).

A disordered region spans residues 1–114 (MDRCKENCVS…QASLQKTEDT (114 aa)). Composition is skewed to polar residues over residues 29 to 60 (QIPS…SQAQ) and 84 to 99 (RLNN…ASGN). Phosphoserine occurs at positions 40 and 50. The segment covering 100 to 114 (DSEKEQASLQKTEDT) has biased composition (basic and acidic residues). Residues 124–374 (FDIGRPLGKG…LAEVLEHPWI (251 aa)) enclose the Protein kinase domain. ATP is bound by residues Lys134, Lys153, and 201-204 (LEYA). Asp247 serves as the catalytic Proton acceptor. A Glycyl lysine isopeptide (Lys-Gly) (interchain with G-Cter in SUMO2) cross-link involves residue Lys249. Residues 251–252 (EN) and Asp265 each bind ATP. An activation segment region spans residues 271–284 (HAPSSRRTTMCGTL). Phosphothreonine occurs at positions 278 and 279. Ser333 carries the phosphoserine; by PKA and PAK modification. The span at 376–385 (ANSSKPPTGH) shows a compositional bias: polar residues. Residues 376 to 395 (ANSSKPPTGHTSKEPTSKSS) are disordered. The span at 386–395 (TSKEPTSKSS) shows a compositional bias: basic and acidic residues.

This sequence belongs to the protein kinase superfamily. Ser/Thr protein kinase family. Aurora subfamily. As to quaternary structure, part of a complex composed of NEDD9, AURKA and CTTN; within the complex NEDD9 acts as a scaffold protein and is required for complex formation. Identified in a complex with AUNIP and NIN. Interacts with CPEB1, JTB, TACC1, TPX2, PPP2CA, as well as with the protein phosphatase type 1 (PP1) isoforms PPP1CA, PPP1CB and PPP1CC. Also interacts with its substrates ARHGEF2, BORA, KIF2A, PARD3, and p53/TP53. Interaction with BORA promotes phosphorylation of PLK1. Interacts with GADD45A, competing with its oligomerization. Interacts with FBXL7 and CIMAP3. Interacts (via C-terminus) with AUNIP (via C-terminus). Interacts with SIRT2. Interacts with FRY; this interaction facilitates AURKA-mediated PLK1 phosphorylation. Interacts with MYCN; interaction is phospho-independent and triggers AURKA activation; AURKA competes with FBXW7 for binding to unphosphorylated MYCN but not for binding to phosphorylated MYCN. Interacts with HNRNPU. Interacts with AAAS. Interacts with KLHL18 and CUL3. Interacts with FOXP1. Interacts with HDAC6; AURKA-mediated phosphorylation of HDAC6 promotes deacetylation of alpha-tubulin. In terms of processing, activated by phosphorylation at Thr-279; this brings about a change in the conformation of the activation segment. Phosphorylation at Thr-279 varies during the cell cycle and is highest during M phase. Autophosphorylated at Thr-279 upon TPX2 binding. Thr-279 can be phosphorylated by several kinases, including PAK and PKA. Protein phosphatase type 1 (PP1) binds AURKA and inhibits its activity by dephosphorylating Thr-279 during mitosis. Phosphorylation at Ser-333 decreases the kinase activity. PPP2CA controls degradation by dephosphorylating Ser-52 at the end of mitosis. Ubiquitinated by the anaphase-promoting complex (APC), leading to its degradation by the proteasome. Ubiquitinated by CHFR, leading to its degradation by the proteasome. Ubiquitinated by the E3 ubiquitin-protein ligase complex SCF(FBXL7) during mitosis, leading to its degradation by the proteasome. In terms of tissue distribution, detected in embryonic neurons in dorsal root ganglia and brain cortex (at protein level). Highly expressed in testis, in about one third of the seminiferous tubules. Expression is restricted to specific spermatocytes nearing completion of prophase, with levels falling off on transition to elongated spermatids. Highly expressed in the ovary, expression in the oocyte starts around the transition to large growing follicle. Abundant expression is seen in the proliferating granulosa and thecal cells of the growing follicle, and in the young corpus luteum. Very weakly expressed in spleen and intestine.

It localises to the cytoplasm. Its subcellular location is the cytoskeleton. The protein resides in the microtubule organizing center. It is found in the centrosome. The protein localises to the spindle pole. It localises to the centriole. Its subcellular location is the cell projection. The protein resides in the neuron projection. It is found in the cilium. The protein localises to the cilium basal body. It localises to the basolateral cell membrane. The enzyme catalyses L-seryl-[protein] + ATP = O-phospho-L-seryl-[protein] + ADP + H(+). It catalyses the reaction L-threonyl-[protein] + ATP = O-phospho-L-threonyl-[protein] + ADP + H(+). With respect to regulation, activation of CDK1, appears to be an upstream event of AURKA activation. Phosphatase inhibitor-2 (PPP1R2) and TPX2 act also as activators. Inactivated by the G2 checkpoint. Inhibited by GADD45A and p53/TP53, and through dephosphorylation by protein phosphatase type 1 (PP1). MLN8054 is also a potent and selective inhibitor. Activated during the early phase of cilia disassembly in the presence of CIMAP3. Inhibited by the small molecule inhibitor VX-680. Its function is as follows. Mitotic serine/threonine kinase that contributes to the regulation of cell cycle progression. Associates with the centrosome and the spindle microtubules during mitosis and plays a critical role in various mitotic events including the establishment of mitotic spindle, centrosome duplication, centrosome separation as well as maturation, chromosomal alignment, spindle assembly checkpoint, and cytokinesis. Required for normal spindle positioning during mitosis and for the localization of NUMA1 and DCTN1 to the cell cortex during metaphase. Required for initial activation of CDK1 at centrosomes. Phosphorylates numerous target proteins, including ARHGEF2, BORA, BRCA1, CDC25B, DLGP5, HDAC6, KIF2A, LATS2, NDEL1, PARD3, PPP1R2, PLK1, RASSF1, TACC3, p53/TP53 and TPX2. Phosphorylates MCRS1 which is required for MCRS1-mediated kinetochore fiber assembly and mitotic progression. Regulates KIF2A tubulin depolymerase activity. Required for normal axon formation. Plays a role in microtubule remodeling during neurite extension. Important for microtubule formation and/or stabilization. Also acts as a key regulatory component of the p53/TP53 pathway, and particularly the checkpoint-response pathways critical for oncogenic transformation of cells, by phosphorylating and destabilizing p53/TP53. Phosphorylates its own inhibitors, the protein phosphatase type 1 (PP1) isoforms, to inhibit their activity. Inhibits cilia outgrowth. Required for cilia disassembly via phosphorylation of HDAC6 and subsequent deacetylation of alpha-tubulin. Regulates protein levels of the anti-apoptosis protein BIRC5 by suppressing the expression of the SCF(FBXL7) E3 ubiquitin-protein ligase substrate adapter FBXL7 through the phosphorylation of the transcription factor FOXP1. In Mus musculus (Mouse), this protein is Aurora kinase A (Aurka).